The primary structure comprises 318 residues: uncharacterized protein (318 aa).

Positions 67–157 (LAFDELEKEK…SLKAIQTSQE (91 aa)) form a coiled coil. The tract at residues 172–318 (ESTNKVEKNA…KGFFARLFNL (147 aa)) is disordered. Composition is skewed to basic and acidic residues over residues 175 to 193 (NKVEKNAVTEDKADSKDSK) and 219 to 236 (KVDKEDQISATEAIEKAS). The span at 237–248 (VEQSKNGNAAET) shows a compositional bias: polar residues. 2 stretches are compositionally biased toward basic and acidic residues: residues 249-274 (SNKEATIDAEAQHDAEQQVAEAHAEA) and 300-310 (SEPKPQEEKKG).

This is an uncharacterized protein from Staphylococcus aureus (strain MW2).